The following is a 251-amino-acid chain: Hydroxyacylglutathione hydrolase (251 aa).

Positions 53, 55, 57, 58, 110, 127, and 165 each coordinate Zn(2+).

The protein belongs to the metallo-beta-lactamase superfamily. Glyoxalase II family. Monomer. Zn(2+) is required as a cofactor.

The catalysed reaction is an S-(2-hydroxyacyl)glutathione + H2O = a 2-hydroxy carboxylate + glutathione + H(+). The protein operates within secondary metabolite metabolism; methylglyoxal degradation; (R)-lactate from methylglyoxal: step 2/2. Its function is as follows. Thiolesterase that catalyzes the hydrolysis of S-D-lactoyl-glutathione to form glutathione and D-lactic acid. This is Hydroxyacylglutathione hydrolase from Escherichia coli O17:K52:H18 (strain UMN026 / ExPEC).